We begin with the raw amino-acid sequence, 253 residues long: Redox-sensing transcriptional repressor Rex (253 aa).

The segment at residues 26 to 65 (LYLRALTALSERSVPTVSSEELATAAGVNSAKLRKDFSYL) is a DNA-binding region (H-T-H motif). Residue 100–105 (GIGNLG) participates in NAD(+) binding. A disordered region spans residues 217-253 (RKAGEDSAAEDEGAPPMRATPASRKGPDGDMPAVMPA).

This sequence belongs to the transcriptional regulatory Rex family. In terms of assembly, homodimer.

It is found in the cytoplasm. Functionally, modulates transcription in response to changes in cellular NADH/NAD(+) redox state. In Streptomyces griseus subsp. griseus (strain JCM 4626 / CBS 651.72 / NBRC 13350 / KCC S-0626 / ISP 5235), this protein is Redox-sensing transcriptional repressor Rex.